Consider the following 209-residue polypeptide: Small ribosomal subunit protein uS4 (209 aa).

One can recognise an S4 RNA-binding domain in the interval 99–160 (RRLDNVVYRL…GSKEMTLLGQ (62 aa)).

It belongs to the universal ribosomal protein uS4 family. In terms of assembly, part of the 30S ribosomal subunit. Contacts protein S5. The interaction surface between S4 and S5 is involved in control of translational fidelity.

One of the primary rRNA binding proteins, it binds directly to 16S rRNA where it nucleates assembly of the body of the 30S subunit. Its function is as follows. With S5 and S12 plays an important role in translational accuracy. This Koribacter versatilis (strain Ellin345) protein is Small ribosomal subunit protein uS4.